The primary structure comprises 166 residues: UBA-like domain-containing protein 2-A (166 aa).

The tract at residues Gln-120–Arg-166 is disordered.

It belongs to the UBALD family.

The protein is UBA-like domain-containing protein 2-A (ubald2-a) of Xenopus laevis (African clawed frog).